The chain runs to 93 residues: Small ribosomal subunit protein uS15 (93 aa).

The protein belongs to the universal ribosomal protein uS15 family. Part of the 30S ribosomal subunit. Forms a bridge to the 50S subunit in the 70S ribosome, contacting the 23S rRNA.

In terms of biological role, one of the primary rRNA binding proteins, it binds directly to 16S rRNA where it helps nucleate assembly of the platform of the 30S subunit by binding and bridging several RNA helices of the 16S rRNA. Forms an intersubunit bridge (bridge B4) with the 23S rRNA of the 50S subunit in the ribosome. The protein is Small ribosomal subunit protein uS15 of Anaplasma marginale (strain Florida).